A 591-amino-acid polypeptide reads, in one-letter code: Aspartate--tRNA(Asp/Asn) ligase (591 aa).

Glu170 contributes to the L-aspartate binding site. Positions 194-197 (QLFK) are aspartate. Arg216 provides a ligand contact to L-aspartate. ATP-binding positions include 216-218 (RDE) and Gln225. His448 lines the L-aspartate pocket. Glu482 lines the ATP pocket. Residue Arg489 participates in L-aspartate binding. Residue 534 to 537 (GWDR) coordinates ATP. The interval 559–591 (GGVDPLTDAPAPITEQQRKESGIDVKPEPSKPH) is disordered. Over residues 574 to 591 (QQRKESGIDVKPEPSKPH) the composition is skewed to basic and acidic residues.

This sequence belongs to the class-II aminoacyl-tRNA synthetase family. Type 1 subfamily. As to quaternary structure, homodimer.

The protein localises to the cytoplasm. It carries out the reaction tRNA(Asx) + L-aspartate + ATP = L-aspartyl-tRNA(Asx) + AMP + diphosphate. Aspartyl-tRNA synthetase with relaxed tRNA specificity since it is able to aspartylate not only its cognate tRNA(Asp) but also tRNA(Asn). Reaction proceeds in two steps: L-aspartate is first activated by ATP to form Asp-AMP and then transferred to the acceptor end of tRNA(Asp/Asn). This Mycolicibacterium paratuberculosis (strain ATCC BAA-968 / K-10) (Mycobacterium paratuberculosis) protein is Aspartate--tRNA(Asp/Asn) ligase.